The sequence spans 1360 residues: DNA-directed RNA polymerase subunit beta (1360 aa).

The protein belongs to the RNA polymerase beta chain family. As to quaternary structure, the RNAP catalytic core consists of 2 alpha, 1 beta, 1 beta' and 1 omega subunit. When a sigma factor is associated with the core the holoenzyme is formed, which can initiate transcription.

The catalysed reaction is RNA(n) + a ribonucleoside 5'-triphosphate = RNA(n+1) + diphosphate. Its function is as follows. DNA-dependent RNA polymerase catalyzes the transcription of DNA into RNA using the four ribonucleoside triphosphates as substrates. The polypeptide is DNA-directed RNA polymerase subunit beta (Desulfotalea psychrophila (strain LSv54 / DSM 12343)).